A 225-amino-acid chain; its full sequence is Venom allergen 5 (225 aa).

The first 23 residues, methionine 1–alanine 23, serve as a signal peptide directing secretion. 4 disulfide bridges follow: cysteine 27/cysteine 39, cysteine 31/cysteine 124, cysteine 49/cysteine 117, and cysteine 191/cysteine 208. An SCP domain is found at lysine 69–tyrosine 210.

This sequence belongs to the CRISP family. Venom allergen 5-like subfamily. As to expression, expressed by the venom gland.

The protein localises to the secreted. The polypeptide is Venom allergen 5 (Vespa magnifica (Hornet)).